The primary structure comprises 326 residues: tRNA uridine(34) hydroxylase (326 aa).

The Rhodanese domain maps to 123 to 217; that stretch reads SDPDVILVDT…YLEEVKQEES (95 aa). Catalysis depends on C177, which acts as the Cysteine persulfide intermediate.

Belongs to the TrhO family.

It carries out the reaction uridine(34) in tRNA + AH2 + O2 = 5-hydroxyuridine(34) in tRNA + A + H2O. Catalyzes oxygen-dependent 5-hydroxyuridine (ho5U) modification at position 34 in tRNAs. This is tRNA uridine(34) hydroxylase from Shewanella denitrificans (strain OS217 / ATCC BAA-1090 / DSM 15013).